The following is a 61-amino-acid chain: ITIEQGELVLNCISDKMMCEFEAAAEMVVPSPCPSEYDTCILETNIPPANQXPVHXIPXMH.

Post-translationally, glycosylated. In terms of tissue distribution, expressed by the calcifying mantle epithelium and incorporated into the shell's calcitic prismatic layer.

This chain is Calprismin, found in Pinna nobilis (Noble pen shell).